Here is a 376-residue protein sequence, read N- to C-terminus: RING-H2 finger protein ATL46 (376 aa).

A helical membrane pass occupies residues 45-65; that stretch reads VLFVIVILAVLFFISGLLHLL. The RING-type; atypical zinc finger occupies 143 to 185; the sequence is CAVCLCEFSEKDKLRLLPMCSHAFHLNCIDTWLQSNSTCPLCR. Basic and acidic residues-rich tracts occupy residues 296–305 and 358–376; these read RLKPQDKESE and DLPK…NDGR. Disordered stretches follow at residues 296 to 320 and 341 to 376; these read RLKP…KINT and FSSD…NDGR.

This sequence belongs to the RING-type zinc finger family. ATL subfamily.

Its subcellular location is the membrane. The catalysed reaction is S-ubiquitinyl-[E2 ubiquitin-conjugating enzyme]-L-cysteine + [acceptor protein]-L-lysine = [E2 ubiquitin-conjugating enzyme]-L-cysteine + N(6)-ubiquitinyl-[acceptor protein]-L-lysine.. It functions in the pathway protein modification; protein ubiquitination. This Arabidopsis thaliana (Mouse-ear cress) protein is RING-H2 finger protein ATL46 (ATL46).